The sequence spans 195 residues: MIERSGYGIIAASLLLSAVAYLLHPLISALFVGFALFTAYFFRDPERKIGEGVVSPADGRIDYLEGRRLEIFMSPFDCHINRAPWGGKVLSVKFIEGSTPPAFIRKSGVRTNEILIETEHGVFRVLQMAGIFARRIVSYVSEGDVVKKGQKIGMIRFGSRVVLEVPEGFRFVRGVGEKVKAGETVALRDESFQGS.

The Schiff-base intermediate with substrate; via pyruvic acid role is filled by S159. The residue at position 159 (S159) is a Pyruvic acid (Ser); by autocatalysis.

The protein belongs to the phosphatidylserine decarboxylase family. PSD-A subfamily. As to quaternary structure, heterodimer of a large membrane-associated beta subunit and a small pyruvoyl-containing alpha subunit. Requires pyruvate as cofactor. Post-translationally, is synthesized initially as an inactive proenzyme. Formation of the active enzyme involves a self-maturation process in which the active site pyruvoyl group is generated from an internal serine residue via an autocatalytic post-translational modification. Two non-identical subunits are generated from the proenzyme in this reaction, and the pyruvate is formed at the N-terminus of the alpha chain, which is derived from the carboxyl end of the proenzyme. The autoendoproteolytic cleavage occurs by a canonical serine protease mechanism, in which the side chain hydroxyl group of the serine supplies its oxygen atom to form the C-terminus of the beta chain, while the remainder of the serine residue undergoes an oxidative deamination to produce ammonia and the pyruvoyl prosthetic group on the alpha chain. During this reaction, the Ser that is part of the protease active site of the proenzyme becomes the pyruvoyl prosthetic group, which constitutes an essential element of the active site of the mature decarboxylase. In terms of processing, is synthesized initially as an inactive proenzyme. Formation of the active enzyme involves a self-maturation process in which the active site pyruvoyl group is generated from an internal serine residue via an autocatalytic post-translational modification. Two non-identical subunits are generated from the proenzyme in this reaction, and the pyruvate is formed at the N-terminus of the alpha chain, which is derived from the carboxyl end of the proenzyme. The post-translation cleavage follows an unusual pathway, termed non-hydrolytic serinolysis, in which the side chain hydroxyl group of the serine supplies its oxygen atom to form the C-terminus of the beta chain, while the remainder of the serine residue undergoes an oxidative deamination to produce ammonia and the pyruvoyl prosthetic group on the alpha chain.

The protein resides in the cell membrane. It catalyses the reaction archaetidylserine + H(+) = archaetidylethanolamine + CO2. Functionally, catalyzes the formation of archaetidylethanolamine (PtdEtn) from archaetidylserine (PtdSer). The sequence is that of Putative archaetidylserine decarboxylase proenzyme from Archaeoglobus fulgidus (strain ATCC 49558 / DSM 4304 / JCM 9628 / NBRC 100126 / VC-16).